The primary structure comprises 275 residues: Ribosomal RNA small subunit methyltransferase A (275 aa).

Positions 28, 30, 55, 77, 103, and 123 each coordinate S-adenosyl-L-methionine.

It belongs to the class I-like SAM-binding methyltransferase superfamily. rRNA adenine N(6)-methyltransferase family. RsmA subfamily.

It is found in the cytoplasm. The catalysed reaction is adenosine(1518)/adenosine(1519) in 16S rRNA + 4 S-adenosyl-L-methionine = N(6)-dimethyladenosine(1518)/N(6)-dimethyladenosine(1519) in 16S rRNA + 4 S-adenosyl-L-homocysteine + 4 H(+). Functionally, specifically dimethylates two adjacent adenosines (A1518 and A1519) in the loop of a conserved hairpin near the 3'-end of 16S rRNA in the 30S particle. May play a critical role in biogenesis of 30S subunits. This chain is Ribosomal RNA small subunit methyltransferase A, found in Rhizobium etli (strain ATCC 51251 / DSM 11541 / JCM 21823 / NBRC 15573 / CFN 42).